A 292-amino-acid polypeptide reads, in one-letter code: Probable porphobilinogen deaminase (292 aa).

S-(dipyrrolylmethanemethyl)cysteine is present on Cys-233.

This sequence belongs to the HMBS family. Dipyrromethane is required as a cofactor.

It carries out the reaction 4 porphobilinogen + H2O = hydroxymethylbilane + 4 NH4(+). The protein operates within porphyrin-containing compound metabolism; protoporphyrin-IX biosynthesis; coproporphyrinogen-III from 5-aminolevulinate: step 2/4. In terms of biological role, tetrapolymerization of the monopyrrole PBG into the hydroxymethylbilane pre-uroporphyrinogen in several discrete steps. The polypeptide is Probable porphobilinogen deaminase (hemC) (Methanocaldococcus jannaschii (strain ATCC 43067 / DSM 2661 / JAL-1 / JCM 10045 / NBRC 100440) (Methanococcus jannaschii)).